Consider the following 150-residue polypeptide: Large ribosomal subunit protein bL9 (150 aa).

This sequence belongs to the bacterial ribosomal protein bL9 family.

Its function is as follows. Binds to the 23S rRNA. The polypeptide is Large ribosomal subunit protein bL9 (Burkholderia ambifaria (strain MC40-6)).